The chain runs to 106 residues: Ribonuclease P protein component 4 (106 aa).

Zn(2+) contacts are provided by C63, C66, C89, and C92.

It belongs to the eukaryotic/archaeal RNase P protein component 4 family. As to quaternary structure, consists of a catalytic RNA component and at least 4-5 protein subunits. Requires Zn(2+) as cofactor.

It localises to the cytoplasm. The catalysed reaction is Endonucleolytic cleavage of RNA, removing 5'-extranucleotides from tRNA precursor.. Functionally, part of ribonuclease P, a protein complex that generates mature tRNA molecules by cleaving their 5'-ends. The sequence is that of Ribonuclease P protein component 4 from Methanosphaerula palustris (strain ATCC BAA-1556 / DSM 19958 / E1-9c).